We begin with the raw amino-acid sequence, 376 residues long: DNA double-strand break repair protein Mre11 (376 aa).

Mn(2+) contacts are provided by Asp5, His7, Asp46, and Asp81. Catalysis depends on His82, which acts as the Proton donor. 3 residues coordinate Mn(2+): His159, His189, and His191.

This sequence belongs to the MRE11/RAD32 family. In terms of assembly, homodimer. Forms a heterotetramer composed of two Mre11 subunits and two Rad50 subunits. Requires Mn(2+) as cofactor.

Nuclease activity is regulated by Rad50. Its function is as follows. Part of the Rad50/Mre11 complex, which is involved in the early steps of DNA double-strand break (DSB) repair. The complex may facilitate opening of the processed DNA ends to aid in the recruitment of HerA and NurA. Mre11 binds to DSB ends and has both double-stranded 3'-5' exonuclease activity and single-stranded endonuclease activity. The chain is DNA double-strand break repair protein Mre11 from Thermoplasma acidophilum (strain ATCC 25905 / DSM 1728 / JCM 9062 / NBRC 15155 / AMRC-C165).